A 453-amino-acid chain; its full sequence is 4,4'-diapolycopene-4,4'-dial dehydrogenase (453 aa).

Residues 1 to 20 (MPDNDSHSLKSLPERQREDL) show a composition bias toward basic and acidic residues. Residues 1 to 23 (MPDNDSHSLKSLPERQREDLFSA) are disordered. Residues glutamate 215 and cysteine 249 contribute to the active site.

The protein belongs to the aldehyde dehydrogenase family.

The enzyme catalyses all-trans-4,4'-diapolycopene-4,4'-dial + 2 A + 2 H2O = all-trans-4,4'-diapolycopene-4,4'-dioate + 2 AH2 + 2 H(+). It functions in the pathway carotenoid biosynthesis. Involved in the biosynthesis of the major C30 carotenoid 4,4'-diapolycopene-4,4'-dioic acid, which protects B.firmus from peroxidative reactions. Catalyzes the oxidation of 4,4'-diapolycopene-4,4'-dial to yield 4,4'-diapolycopene-4,4'-dioic aci. This Cytobacillus firmus (Bacillus firmus) protein is 4,4'-diapolycopene-4,4'-dial dehydrogenase.